Reading from the N-terminus, the 616-residue chain is Replication protein A 70 kDa DNA-binding subunit (616 aa).

The residue at position 1 (Met-1) is an N-acetylmethionine. Glycyl lysine isopeptide (Lys-Gly) (interchain with G-Cter in ubiquitin) cross-links involve residues Lys-22 and Lys-88. Residues 121–155 are disordered; that stretch reads GLGQPQVAPPAPAASPAASSRPQPQNGTSGAGSTV. The segment covering 134-145 has biased composition (low complexity); sequence ASPAASSRPQPQ. Residues 146 to 155 are compositionally biased toward polar residues; sequence NGTSGAGSTV. 2 positions are modified to N6-acetyllysine; alternate: Lys-163 and Lys-167. Residues Lys-163 and Lys-167 each participate in a glycyl lysine isopeptide (Lys-Gly) (interchain with G-Cter in ubiquitin); alternate cross-link. At Thr-180 the chain carries Phosphothreonine. Residue Lys-183 forms a Glycyl lysine isopeptide (Lys-Gly) (interchain with G-Cter in ubiquitin) linkage. Thr-191 is subject to Phosphothreonine. Positions 197-281 form a DNA-binding region, OB; the sequence is WTICARVTNK…VKNDYEMTFN (85 aa). Residues Lys-220 and Lys-244 each participate in a glycyl lysine isopeptide (Lys-Gly) (interchain with G-Cter in ubiquitin) cross-link. Position 259 is an N6-acetyllysine; alternate (Lys-259). Residue Lys-259 forms a Glycyl lysine isopeptide (Lys-Gly) (interchain with G-Cter in ubiquitin); alternate linkage. Glycyl lysine isopeptide (Lys-Gly) (interchain with G-Cter in ubiquitin) cross-links involve residues Lys-267 and Lys-331. Ser-384 carries the phosphoserine modification. Glycyl lysine isopeptide (Lys-Gly) (interchain with G-Cter in ubiquitin) cross-links involve residues Lys-410 and Lys-431. A Glycyl lysine isopeptide (Lys-Gly) (interchain with G-Cter in SUMO) cross-link involves residue Lys-449. Residue Lys-458 forms a Glycyl lysine isopeptide (Lys-Gly) (interchain with G-Cter in ubiquitin) linkage. Residues 481–503 form a C4-type zinc finger; that stretch reads CPTQDCNKKVIDQQNGLYRCEKC. Residue Lys-553 forms a Glycyl lysine isopeptide (Lys-Gly) (interchain with G-Cter in ubiquitin) linkage. Lys-577 participates in a covalent cross-link: Glycyl lysine isopeptide (Lys-Gly) (interchain with G-Cter in SUMO).

The protein belongs to the replication factor A protein 1 family. As to quaternary structure, component of the canonical replication protein A complex (RPA), a heterotrimer composed of RPA1, RPA2 and RPA3. The DNA-binding activity may reside exclusively on the RPA1 subunit. Interacts with PRPF19; the PRP19-CDC5L complex is recruited to the sites of DNA repair where it ubiquitinates the replication protein A complex (RPA). Interacts with RIPK1. Interacts with the polymerase alpha subunit POLA1/p180; this interaction stabilizes the replicative complex and reduces the misincorporation rate of DNA polymerase alpha by acting as a fidelity clamp. Interacts with RAD51 and SENP6 to regulate DNA repair. Interacts with HELB; this interaction promotes HELB recruitment to chromatin following DNA damage. Interacts with PRIMPOL; leading to recruit PRIMPOL on chromatin and stimulate its DNA primase activity. Interacts with XPA; the interaction is direct and associates XPA with the RPA complex. Interacts with ETAA1; the interaction is direct and promotes ETAA1 recruitment at stalled replication forks. Interacts with RPA1; this interaction associates HROB with the RPA complex. Interacts (when poly-ADP-ribosylated) with HTATSF1. Post-translationally, DNA damage-induced 'Lys-63'-linked polyubiquitination by PRPF19 mediates ATRIP recruitment to the RPA complex at sites of DNA damage and activation of ATR. Ubiquitinated by RFWD3 at stalled replication forks in response to DNA damage: ubiquitination by RFWD3 does not lead to degradation by the proteasome and promotes removal of the RPA complex from stalled replication forks, promoting homologous recombination. In terms of processing, sumoylated on lysine residues Lys-449 and Lys-577, with Lys-449 being the major site. Sumoylation promotes recruitment of RAD51 to the DNA damage foci to initiate DNA repair through homologous recombination. Desumoylated by SENP6. Poly-ADP-ribosylated by PARP1; promoting recruitment of HTATSF1.

It localises to the nucleus. The protein resides in the PML body. As part of the heterotrimeric replication protein A complex (RPA/RP-A), binds and stabilizes single-stranded DNA intermediates, that form during DNA replication or upon DNA stress. It prevents their reannealing and in parallel, recruits and activates different proteins and complexes involved in DNA metabolism. Thereby, it plays an essential role both in DNA replication and the cellular response to DNA damage. In the cellular response to DNA damage, the RPA complex controls DNA repair and DNA damage checkpoint activation. Through recruitment of ATRIP activates the ATR kinase a master regulator of the DNA damage response. It is required for the recruitment of the DNA double-strand break repair factors RAD51 and RAD52 to chromatin in response to DNA damage. Also recruits to sites of DNA damage proteins like XPA and XPG that are involved in nucleotide excision repair and is required for this mechanism of DNA repair. Also plays a role in base excision repair (BER) probably through interaction with UNG. Also recruits SMARCAL1/HARP, which is involved in replication fork restart, to sites of DNA damage. May also play a role in telomere maintenance. This chain is Replication protein A 70 kDa DNA-binding subunit (RPA1), found in Pongo abelii (Sumatran orangutan).